Consider the following 94-residue polypeptide: Large ribosomal subunit protein bL25 (94 aa).

It belongs to the bacterial ribosomal protein bL25 family. As to quaternary structure, part of the 50S ribosomal subunit; part of the 5S rRNA/L5/L18/L25 subcomplex. Contacts the 5S rRNA. Binds to the 5S rRNA independently of L5 and L18.

Functionally, this is one of the proteins that binds to the 5S RNA in the ribosome where it forms part of the central protuberance. This chain is Large ribosomal subunit protein bL25, found in Yersinia pestis bv. Antiqua (strain Antiqua).